A 913-amino-acid chain; its full sequence is MSLSQNAIFKSQTGEENLMSSNHRDSESITDVCSNEDLPEVELVNLLEEQLPQYKLRVDSLFLYENQDWSQSSHQQQDASETLSPVLAEETFRYMILGTDRVEQMTKTYNDIDMVTHLLAERDRDLELAARIGQALLKRNHVLSEQNESLEEQLGQAFDQVNQLQHELSKKEELLRIVSIASEESETDSSCSTPLRFNESFSLSQGLLQLDMMHEKLKELEEENMALRSKACHIKTETFTYEEKEQKLINDCVNELRETNAQMSRMTEELSGKSDELLRYQEEISSLLSQIVDLQHKLKEHVIEKEELRLHLQASKDAQRQLTMELHELQDRNMECLGMLHESQEEIKELRNKAGPSAHLCFSQAYGVFAGESLAAEIEGTMRKKLSLDEESVFKQKAQQKRVFDTVKVANDTRGRSVTFPVLLPIPGSNRSSVIMTAKPFESGVQQTEDKTLPNQGSSTEVPGNSHPRDPPGLPEDSDLATALHRLSLRRQNYLSEKQFFAEEWERKLQILAEQEEEVSSCEALTENLASFCTDQSETTELGSAGCLRGFMPEKLQIVKPLEGSQTLHHWQQLAQPNLGTILDPRPGVITKGFTQMPKDAVYHISDLEEDEEVGITFQVQQPLQLEQKPAPPPPVTGIFLPPMTSAGGPVSVATSNPGKCLSFTNSTFTFTTCRILHPSDITQVTPSSGFPSLSCGSSAGSASNTAVNSPAASYRLSIGESITNRRDSTITFSSTRSLAKLLQERGISAKVYHSPASENPLLQLRPKALATPSTPPNSPSQSPCSSPVPFEPRVHVSENFLASRPAETFLQEMYGLRPSRAPPDVGQLKMNLVDRLKRLGIARVVKTPVPRENGKSREAEMGLQKPDSAVYLNSGGSLLGGLRRNQSLPVMMGSFGAPVCTTSPKMGILKED.

Polar residues predominate over residues 11–21 (SQTGEENLMSS). The disordered stretch occupies residues 11 to 31 (SQTGEENLMSSNHRDSESITD). An HAP1 N-terminal domain is found at 48-353 (EEQLPQYKLR…QEEIKELRNK (306 aa)). Residues 134–355 (QALLKRNHVL…EIKELRNKAG (222 aa)) are a coiled coil. The interval 359–507 (HLCFSQAYGV…KQFFAEEWER (149 aa)) is interaction with HGS. The disordered stretch occupies residues 442–478 (ESGVQQTEDKTLPNQGSSTEVPGNSHPRDPPGLPEDS). The span at 453–463 (LPNQGSSTEVP) shows a compositional bias: polar residues. A coiled-coil region spans residues 502-519 (AEEWERKLQILAEQEEEV). Composition is skewed to low complexity over residues 688 to 704 (SSGFPSLSCGSSAGSAS) and 780 to 789 (PSQSPCSSPV). 2 disordered regions span residues 688-707 (SSGFPSLSCGSSAGSASNTA) and 769-790 (ALATPSTPPNSPSQSPCSSPVP).

It belongs to the milton family. As to quaternary structure, interacts with RHOT1/Miro-1 and RHOT2/Miro-2. Interacts with GABA-A receptor and O-GlcNAc transferase. Interacts with HGS. O-glycosylated. In terms of tissue distribution, present in heart and brain (at protein level).

The protein localises to the cytoplasm. The protein resides in the early endosome. Its subcellular location is the mitochondrion. Functionally, may regulate endosome-to-lysosome trafficking of membrane cargo, including EGFR. This is Trafficking kinesin-binding protein 2 (Trak2) from Rattus norvegicus (Rat).